The sequence spans 219 residues: Ribose-5-phosphate isomerase A (219 aa).

Substrate is bound by residues 28–31 (TGST), 81–84 (DGAD), and 94–97 (KGGG). Residue E103 is the Proton acceptor of the active site. K121 provides a ligand contact to substrate.

It belongs to the ribose 5-phosphate isomerase family. In terms of assembly, homodimer.

The catalysed reaction is aldehydo-D-ribose 5-phosphate = D-ribulose 5-phosphate. It participates in carbohydrate degradation; pentose phosphate pathway; D-ribose 5-phosphate from D-ribulose 5-phosphate (non-oxidative stage): step 1/1. Catalyzes the reversible conversion of ribose-5-phosphate to ribulose 5-phosphate. This is Ribose-5-phosphate isomerase A from Photobacterium profundum (strain SS9).